A 604-amino-acid polypeptide reads, in one-letter code: Polycomb group protein EMF2B (604 aa).

The C2H2-type zinc finger occupies 310-331; sequence CPFCLVPCGSFKGLGCHLNASH. The segment at 396-440 is disordered; it reads PHIVDSGSPEDAQAGSEDDYVQRENGSSVAHASVDPANSLHGSNL. Residues 454-589 are VEFS-box; sequence LSVERADPRN…DARAMNACNT (136 aa).

The protein belongs to the VEFS (VRN2-EMF2-FIS2-SU(Z)12) family. As to quaternary structure, component of the polycomb repressive complex 2 (PRC2), composed of the core PRC2 components FIE2, EZ1 and CLF. PRC2 methylates 'Lys-27' residues of histone H3 (H3K27me3), leading to transcriptional repression of the affected target gene. As to expression, widely expressed.

Its function is as follows. Polycomb group (PcG) protein. PcG proteins act by forming multiprotein complexes, which are required to maintain the transcriptionally repressive state of homeotic genes throughout development. PcG proteins are not required to initiate repression, but to maintain it during later stages of development. They act via the methylation of histones, rendering chromatin heritably changed in its expressibility. Polycomb group (PcG) protein involved in the repression of flowering under long day (LD) conditions. Regulates floret development. The polypeptide is Polycomb group protein EMF2B (Oryza sativa subsp. japonica (Rice)).